Consider the following 163-residue polypeptide: UPF0262 protein RPB_4349 (163 aa).

Belongs to the UPF0262 family.

This Rhodopseudomonas palustris (strain HaA2) protein is UPF0262 protein RPB_4349.